The primary structure comprises 249 residues: 3-deoxy-manno-octulosonate cytidylyltransferase (249 aa).

It belongs to the KdsB family.

The protein resides in the cytoplasm. The catalysed reaction is 3-deoxy-alpha-D-manno-oct-2-ulosonate + CTP = CMP-3-deoxy-beta-D-manno-octulosonate + diphosphate. The protein operates within nucleotide-sugar biosynthesis; CMP-3-deoxy-D-manno-octulosonate biosynthesis; CMP-3-deoxy-D-manno-octulosonate from 3-deoxy-D-manno-octulosonate and CTP: step 1/1. It participates in bacterial outer membrane biogenesis; lipopolysaccharide biosynthesis. Functionally, activates KDO (a required 8-carbon sugar) for incorporation into bacterial lipopolysaccharide in Gram-negative bacteria. This is 3-deoxy-manno-octulosonate cytidylyltransferase from Brucella anthropi (strain ATCC 49188 / DSM 6882 / CCUG 24695 / JCM 21032 / LMG 3331 / NBRC 15819 / NCTC 12168 / Alc 37) (Ochrobactrum anthropi).